We begin with the raw amino-acid sequence, 448 residues long: U1 small nuclear ribonucleoprotein 70 kDa (448 aa).

The required for interaction with U1 RNA stretch occupies residues 91 to 201 (TEIKNATEDP…GGGLGGTRRG (111 aa)). An RRM domain is found at 102–180 (RTLFIARINY…KRVLVDVERA (79 aa)). The segment at 188-448 (PRRLGGGLGG…SSGDPSWWRQ (261 aa)) is disordered. The span at 191 to 200 (LGGGLGGTRR) shows a compositional bias: gly residues. 2 stretches are compositionally biased toward basic and acidic residues: residues 206-234 (NIKH…REGP) and 262-272 (ERRDRERDRGR). Residues 281 to 293 (SRSRSRERRKRRA) are compositionally biased toward basic residues. Composition is skewed to basic and acidic residues over residues 294-320 (GSRE…DRER) and 346-376 (RDRE…IKEE). Residues 405–425 (RPPPAHHNMFSVPPPPILGRG) are mediates binding to Psi. The span at 426–448 (NASTNPNPDNGQQSSGDPSWWRQ) shows a compositional bias: polar residues.

Component of the U1 snRNP. Interacts with Psi; essential for alternative splicing of P-element transposase. Interacts with the SMN complex.

It localises to the nucleus speckle. It is found in the nucleus. The protein localises to the nucleoplasm. Mediates the splicing of pre-mRNA by binding to the stem loop I region of U1-snRNA. Required during oogenesis for nurse cell chromatin dispersal. This chain is U1 small nuclear ribonucleoprotein 70 kDa (snRNP-U1-70K), found in Drosophila melanogaster (Fruit fly).